The sequence spans 379 residues: UDP-N-acetylglucosamine--N-acetylmuramyl-(pentapeptide) pyrophosphoryl-undecaprenol N-acetylglucosamine transferase (379 aa).

Residues 19–21 (TGG), Asn133, Arg174, Ser207, Ile261, and Gln306 contribute to the UDP-N-acetyl-alpha-D-glucosamine site.

It belongs to the glycosyltransferase 28 family. MurG subfamily.

It is found in the cell inner membrane. The catalysed reaction is di-trans,octa-cis-undecaprenyl diphospho-N-acetyl-alpha-D-muramoyl-L-alanyl-D-glutamyl-meso-2,6-diaminopimeloyl-D-alanyl-D-alanine + UDP-N-acetyl-alpha-D-glucosamine = di-trans,octa-cis-undecaprenyl diphospho-[N-acetyl-alpha-D-glucosaminyl-(1-&gt;4)]-N-acetyl-alpha-D-muramoyl-L-alanyl-D-glutamyl-meso-2,6-diaminopimeloyl-D-alanyl-D-alanine + UDP + H(+). Its pathway is cell wall biogenesis; peptidoglycan biosynthesis. In terms of biological role, cell wall formation. Catalyzes the transfer of a GlcNAc subunit on undecaprenyl-pyrophosphoryl-MurNAc-pentapeptide (lipid intermediate I) to form undecaprenyl-pyrophosphoryl-MurNAc-(pentapeptide)GlcNAc (lipid intermediate II). This chain is UDP-N-acetylglucosamine--N-acetylmuramyl-(pentapeptide) pyrophosphoryl-undecaprenol N-acetylglucosamine transferase, found in Porphyromonas gingivalis (strain ATCC 33277 / DSM 20709 / CIP 103683 / JCM 12257 / NCTC 11834 / 2561).